Consider the following 682-residue polypeptide: uncharacterized protein (682 aa).

The region spanning 284-487 (VVNILADRLI…KDKDIAEYIV (204 aa)) is the MCM domain. Residue 329-336 (TDPGIGKT) participates in ATP binding.

This sequence belongs to the MCM family.

This is an uncharacterized protein from Methanocaldococcus jannaschii (strain ATCC 43067 / DSM 2661 / JAL-1 / JCM 10045 / NBRC 100440) (Methanococcus jannaschii).